We begin with the raw amino-acid sequence, 256 residues long: Thiazole synthase (256 aa).

The active-site Schiff-base intermediate with DXP is lysine 97. 1-deoxy-D-xylulose 5-phosphate is bound by residues glycine 158, 184–185, and 206–207; these read AG and NT.

The protein belongs to the ThiG family. As to quaternary structure, homotetramer. Forms heterodimers with either ThiH or ThiS.

The protein localises to the cytoplasm. It catalyses the reaction [ThiS sulfur-carrier protein]-C-terminal-Gly-aminoethanethioate + 2-iminoacetate + 1-deoxy-D-xylulose 5-phosphate = [ThiS sulfur-carrier protein]-C-terminal Gly-Gly + 2-[(2R,5Z)-2-carboxy-4-methylthiazol-5(2H)-ylidene]ethyl phosphate + 2 H2O + H(+). It functions in the pathway cofactor biosynthesis; thiamine diphosphate biosynthesis. In terms of biological role, catalyzes the rearrangement of 1-deoxy-D-xylulose 5-phosphate (DXP) to produce the thiazole phosphate moiety of thiamine. Sulfur is provided by the thiocarboxylate moiety of the carrier protein ThiS. In vitro, sulfur can be provided by H(2)S. This Pelotomaculum thermopropionicum (strain DSM 13744 / JCM 10971 / SI) protein is Thiazole synthase.